Here is a 461-residue protein sequence, read N- to C-terminus: Cytochrome c biogenesis protein CcsB (461 aa).

The next 3 membrane-spanning stretches (helical) occupy residues 32-52, 91-111, and 178-198; these read LRLAIALLLIIALFSISGTVI, TWWFLSLLVLFGTSLTACTFT, and IGPIIVHIGIVTILLGSIWGA.

Belongs to the Ccs1/CcsB family. As to quaternary structure, may interact with CcsA.

It is found in the cellular thylakoid membrane. Required during biogenesis of c-type cytochromes (cytochrome c6 and cytochrome f) at the step of heme attachment. This Nostoc sp. (strain PCC 7120 / SAG 25.82 / UTEX 2576) protein is Cytochrome c biogenesis protein CcsB.